The sequence spans 414 residues: Phosphoglycerate kinase (414 aa).

Residues V23, D24, F25, N26, R39, S62, H63, G65, and R66 each contribute to the (2R)-3-phosphoglycerate site. At Y75 the chain carries Phosphotyrosine. S76 carries the post-translational modification Phosphoserine. Residues L121 and R122 each contribute to the (2R)-3-phosphoglycerate site. S143 is modified (phosphoserine). (2R)-3-phosphoglycerate contacts are provided by H168 and R169. A phosphoserine mark is found at S172, S173, and S183. G211 serves as a coordination point for ADP. G211 contributes to the CDP binding site. Residues A212 and K213 each coordinate AMP. An ATP-binding site is contributed by A212. A212 contacts Mg(2+). Residues A215 and D216 each coordinate Mg(2+). A CDP-binding site is contributed by D216. Residue K217 participates in AMP binding. K217 lines the ATP pocket. G235 provides a ligand contact to ADP. G235 is a CDP binding site. G236 provides a ligand contact to AMP. G236 contributes to the ATP binding site. Phosphoserine occurs at positions 253 and 260. Residue T299 is modified to Phosphothreonine. G310 provides a ligand contact to AMP. G310 contributes to the ATP binding site. Position 328 is a phosphoserine (S328). CDP contacts are provided by G335, A337, and F340. Residue F340 participates in ADP binding. E341 contacts AMP. E341 serves as a coordination point for ATP. S351 is modified (phosphoserine). The ATP site is built by D372 and T373. D372 contributes to the Mg(2+) binding site. At T373 the chain carries Phosphothreonine. Phosphoserine is present on residues S387, S390, S412, and S413.

This sequence belongs to the phosphoglycerate kinase family. Monomer. Mg(2+) serves as cofactor.

The protein resides in the cytoplasm. The protein localises to the mitochondrion. The catalysed reaction is (2R)-3-phosphoglycerate + ATP = (2R)-3-phospho-glyceroyl phosphate + ADP. It participates in carbohydrate degradation; glycolysis; pyruvate from D-glyceraldehyde 3-phosphate: step 2/5. Functionally, catalyzes one of the two ATP producing reactions in the glycolytic pathway via the reversible conversion of 1,3-diphosphoglycerate to 3-phosphoglycerate. Both L- and D- forms of purine and pyrimidine nucleotides can be used as substrates, but the activity is much lower on pyrimidines. Negatively regulates the biosynthesis of acetyl-CoA from pyruvate in the mitochondrion. This Schizosaccharomyces pombe (strain 972 / ATCC 24843) (Fission yeast) protein is Phosphoglycerate kinase (pgk1).